Here is a 405-residue protein sequence, read N- to C-terminus: Tryptophan synthase beta chain (405 aa).

Lys-98 is subject to N6-(pyridoxal phosphate)lysine.

Belongs to the TrpB family. In terms of assembly, tetramer of two alpha and two beta chains. Requires pyridoxal 5'-phosphate as cofactor.

The catalysed reaction is (1S,2R)-1-C-(indol-3-yl)glycerol 3-phosphate + L-serine = D-glyceraldehyde 3-phosphate + L-tryptophan + H2O. The protein operates within amino-acid biosynthesis; L-tryptophan biosynthesis; L-tryptophan from chorismate: step 5/5. In terms of biological role, the beta subunit is responsible for the synthesis of L-tryptophan from indole and L-serine. This chain is Tryptophan synthase beta chain, found in Xylella fastidiosa (strain M12).